The following is a 398-amino-acid chain: Digeranylgeranylglycerophospholipid reductase (398 aa).

Residues Ala15, Glu34, Cys45, Ala46, Gly48, Arg99, Ala123, Asp280, Gly292, and Ile293 each coordinate FAD. Residue Val372 participates in a 2,3-bis-O-(geranylgeranyl)-sn-glycerol 1-phospholipid binding.

The protein belongs to the geranylgeranyl reductase family. DGGGPL reductase subfamily. The cofactor is FAD.

The catalysed reaction is a 2,3-bis-O-phytanyl-sn-glycerol 1-phospholipid + 8 oxidized 2[4Fe-4S]-[ferredoxin] = a 2,3-bis-O-(geranylgeranyl)-sn-glycerol 1-phospholipid + 8 reduced 2[4Fe-4S]-[ferredoxin] + 16 H(+). It carries out the reaction 2,3-bis-O-(phytanyl)-sn-glycerol 1-phosphate + 8 oxidized 2[4Fe-4S]-[ferredoxin] = 2,3-bis-O-(geranylgeranyl)-sn-glycerol 1-phosphate + 8 reduced 2[4Fe-4S]-[ferredoxin] + 16 H(+). It catalyses the reaction a 2,3-bis-O-phytanyl-sn-glycerol 1-phospholipid + 8 A = a 2,3-bis-O-(geranylgeranyl)-sn-glycerol 1-phospholipid + 8 AH2. The enzyme catalyses CDP-2,3-bis-O-(geranylgeranyl)-sn-glycerol + 8 AH2 = CDP-2,3-bis-O-(phytanyl)-sn-glycerol + 8 A. The catalysed reaction is archaetidylserine + 8 AH2 = 2,3-bis-O-phytanyl-sn-glycero-3-phospho-L-serine + 8 A. It functions in the pathway membrane lipid metabolism; glycerophospholipid metabolism. Functionally, is involved in the reduction of 2,3-digeranylgeranylglycerophospholipids (unsaturated archaeols) into 2,3-diphytanylglycerophospholipids (saturated archaeols) in the biosynthesis of archaeal membrane lipids. Catalyzes the formation of archaetidic acid (2,3-di-O-phytanyl-sn-glyceryl phosphate) from 2,3-di-O-geranylgeranylglyceryl phosphate (DGGGP) via the hydrogenation of each double bond of the isoprenoid chains. Is also probably able to reduce double bonds of geranyl groups in CDP-2,3-bis-O-(geranylgeranyl)-sn-glycerol and archaetidylserine, thus acting at various stages in the biosynthesis of archaeal membrane lipids. This chain is Digeranylgeranylglycerophospholipid reductase, found in Methanoculleus marisnigri (strain ATCC 35101 / DSM 1498 / JR1).